We begin with the raw amino-acid sequence, 807 residues long: Ribosomal RNA large subunit methyltransferase K/L (807 aa).

The THUMP domain occupies 67–182 (QIYKICLWSR…EKQAEIFLDL (116 aa)). The span at 548–560 (NTQYGNPEASAQS) shows a compositional bias: polar residues. The disordered stretch occupies residues 548–602 (NTQYGNPEASAQSKESKNAPEPKKDNRNRYKGNKFQQAREEAKRQEAQRLAQKKR). Composition is skewed to basic and acidic residues over residues 561 to 575 (KESK…DNRN) and 584 to 594 (QAREEAKRQEA).

This sequence belongs to the methyltransferase superfamily. RlmKL family.

The protein localises to the cytoplasm. The catalysed reaction is guanosine(2445) in 23S rRNA + S-adenosyl-L-methionine = N(2)-methylguanosine(2445) in 23S rRNA + S-adenosyl-L-homocysteine + H(+). It carries out the reaction guanosine(2069) in 23S rRNA + S-adenosyl-L-methionine = N(2)-methylguanosine(2069) in 23S rRNA + S-adenosyl-L-homocysteine + H(+). Functionally, specifically methylates the guanine in position 2445 (m2G2445) and the guanine in position 2069 (m7G2069) of 23S rRNA. The sequence is that of Ribosomal RNA large subunit methyltransferase K/L from Psychrobacter sp. (strain PRwf-1).